Consider the following 318-residue polypeptide: dTDP-6-deoxy-L-talose 4-dehydrogenase (NAD(P)(+)) (318 aa).

Residues 19–20, 60–61, Asn-95, Thr-120, Tyr-145, and Lys-149 each bind NAD(+); these read FI and DP. Substrate contacts are provided by Thr-120 and Tyr-145. Tyr-145 serves as the catalytic Proton acceptor.

Belongs to the NAD(P)-dependent epimerase/dehydratase family.

The enzyme catalyses dTDP-6-deoxy-beta-L-talose + NAD(+) = dTDP-4-dehydro-beta-L-rhamnose + NADH + H(+). The catalysed reaction is dTDP-6-deoxy-beta-L-talose + NADP(+) = dTDP-4-dehydro-beta-L-rhamnose + NADPH + H(+). Its function is as follows. Catalyzes the reduction of dTDP-6-deoxy-L-lyxo-4-hexulose to dTDP-6-deoxy-L-talose. Can use NAD(+) or NADP(+). The chain is dTDP-6-deoxy-L-talose 4-dehydrogenase (NAD(P)(+)) (tal) from Kitasatospora kifunensis (Streptomyces kifunensis).